A 264-amino-acid chain; its full sequence is Thymidylate synthase (264 aa).

Residue Arg21 participates in dUMP binding. His51 provides a ligand contact to (6R)-5,10-methylene-5,6,7,8-tetrahydrofolate. DUMP is bound at residue 126-127; that stretch reads RR. Cys146 functions as the Nucleophile in the catalytic mechanism. DUMP contacts are provided by residues 166-169, Asn177, and 207-209; these read RSAD and HIY. Asp169 is a binding site for (6R)-5,10-methylene-5,6,7,8-tetrahydrofolate. Ala263 provides a ligand contact to (6R)-5,10-methylene-5,6,7,8-tetrahydrofolate.

Belongs to the thymidylate synthase family. Bacterial-type ThyA subfamily. As to quaternary structure, homodimer.

It is found in the cytoplasm. The enzyme catalyses dUMP + (6R)-5,10-methylene-5,6,7,8-tetrahydrofolate = 7,8-dihydrofolate + dTMP. The protein operates within pyrimidine metabolism; dTTP biosynthesis. In terms of biological role, catalyzes the reductive methylation of 2'-deoxyuridine-5'-monophosphate (dUMP) to 2'-deoxythymidine-5'-monophosphate (dTMP) while utilizing 5,10-methylenetetrahydrofolate (mTHF) as the methyl donor and reductant in the reaction, yielding dihydrofolate (DHF) as a by-product. This enzymatic reaction provides an intracellular de novo source of dTMP, an essential precursor for DNA biosynthesis. The polypeptide is Thymidylate synthase (Porphyromonas gingivalis (strain ATCC BAA-308 / W83)).